A 183-amino-acid polypeptide reads, in one-letter code: Protein Syd (183 aa).

This sequence belongs to the Syd family.

It is found in the cell inner membrane. In terms of biological role, interacts with the SecY protein in vivo. May bind preferentially to an uncomplexed state of SecY, thus functioning either as a chelating agent for excess SecY in the cell or as a regulatory factor that negatively controls the translocase function. In Aliivibrio fischeri (strain ATCC 700601 / ES114) (Vibrio fischeri), this protein is Protein Syd.